A 187-amino-acid polypeptide reads, in one-letter code: Elongation factor P (187 aa).

Belongs to the elongation factor P family.

The protein resides in the cytoplasm. The protein operates within protein biosynthesis; polypeptide chain elongation. Involved in peptide bond synthesis. Stimulates efficient translation and peptide-bond synthesis on native or reconstituted 70S ribosomes in vitro. Probably functions indirectly by altering the affinity of the ribosome for aminoacyl-tRNA, thus increasing their reactivity as acceptors for peptidyl transferase. This is Elongation factor P from Desulfatibacillum aliphaticivorans.